Consider the following 231-residue polypeptide: MTPDQVIVALDVPDLPKAIALVDRLPGVGFWKVGLELFVGAGPVILAELKDRGKRIFLDLKFHDIPNTMLGACLSASRYEVDLLTLHATAGSQALTLAAQAMAPLPHPPKLLAITLLTSIGDRQLREELQQPLAVDDYVNAMARLARNAGIDGAVCSPQEVAKLRQTCGPEFLLVTPGVRPLWSAPGDQQRVMIPAQAIAAGANYVVIGRPITADPSPEAAWERLCQDLAV.

Substrate contacts are provided by residues D11, K32, 59–68, T118, R180, Q189, G209, and R210; that span reads DLKFHDIPNT. Residue K61 is the Proton donor of the active site.

It belongs to the OMP decarboxylase family. Type 1 subfamily. As to quaternary structure, homodimer.

The catalysed reaction is orotidine 5'-phosphate + H(+) = UMP + CO2. It participates in pyrimidine metabolism; UMP biosynthesis via de novo pathway; UMP from orotate: step 2/2. Functionally, catalyzes the decarboxylation of orotidine 5'-monophosphate (OMP) to uridine 5'-monophosphate (UMP). The chain is Orotidine 5'-phosphate decarboxylase from Synechocystis sp. (strain ATCC 27184 / PCC 6803 / Kazusa).